Here is a 292-residue protein sequence, read N- to C-terminus: Glutamate racemase (292 aa).

Residues 28–29 (DS) and 60–61 (YG) each bind substrate. C91 serves as the catalytic Proton donor/acceptor. 92-93 (NT) provides a ligand contact to substrate. The Proton donor/acceptor role is filled by C200. 201 to 202 (TH) is a substrate binding site.

It belongs to the aspartate/glutamate racemases family.

It catalyses the reaction L-glutamate = D-glutamate. The protein operates within cell wall biogenesis; peptidoglycan biosynthesis. Functionally, provides the (R)-glutamate required for cell wall biosynthesis. This Nostoc sp. (strain PCC 7120 / SAG 25.82 / UTEX 2576) protein is Glutamate racemase.